Here is a 422-residue protein sequence, read N- to C-terminus: UDP-N-acetylmuramoylalanine--D-glutamate ligase (422 aa).

An ATP-binding site is contributed by 102–108 (GTNGKTT).

This sequence belongs to the MurCDEF family.

The protein localises to the cytoplasm. The catalysed reaction is UDP-N-acetyl-alpha-D-muramoyl-L-alanine + D-glutamate + ATP = UDP-N-acetyl-alpha-D-muramoyl-L-alanyl-D-glutamate + ADP + phosphate + H(+). It participates in cell wall biogenesis; peptidoglycan biosynthesis. Functionally, cell wall formation. Catalyzes the addition of glutamate to the nucleotide precursor UDP-N-acetylmuramoyl-L-alanine (UMA). This is UDP-N-acetylmuramoylalanine--D-glutamate ligase from Helicobacter pylori (strain J99 / ATCC 700824) (Campylobacter pylori J99).